A 184-amino-acid chain; its full sequence is ATP synthase subunit b, chloroplastic (184 aa).

Residues 31–53 form a helical membrane-spanning segment; that stretch reads LINLSVVLGVLIYFGKGVLSNLL.

It belongs to the ATPase B chain family. As to quaternary structure, F-type ATPases have 2 components, F(1) - the catalytic core - and F(0) - the membrane proton channel. F(1) has five subunits: alpha(3), beta(3), gamma(1), delta(1), epsilon(1). F(0) has four main subunits: a(1), b(1), b'(1) and c(10-14). The alpha and beta chains form an alternating ring which encloses part of the gamma chain. F(1) is attached to F(0) by a central stalk formed by the gamma and epsilon chains, while a peripheral stalk is formed by the delta, b and b' chains.

It is found in the plastid. Its subcellular location is the chloroplast thylakoid membrane. F(1)F(0) ATP synthase produces ATP from ADP in the presence of a proton or sodium gradient. F-type ATPases consist of two structural domains, F(1) containing the extramembraneous catalytic core and F(0) containing the membrane proton channel, linked together by a central stalk and a peripheral stalk. During catalysis, ATP synthesis in the catalytic domain of F(1) is coupled via a rotary mechanism of the central stalk subunits to proton translocation. Its function is as follows. Component of the F(0) channel, it forms part of the peripheral stalk, linking F(1) to F(0). In Cycas taitungensis (Prince sago), this protein is ATP synthase subunit b, chloroplastic.